A 572-amino-acid chain; its full sequence is Urease subunit alpha (572 aa).

The 439-residue stretch at 134 to 572 (GGIDAHVHMI…VSLGQLYFFS (439 aa)) folds into the Urease domain. Ni(2+) contacts are provided by His-139, His-141, and Lys-222. Residue Lys-222 is modified to N6-carboxylysine. His-224 provides a ligand contact to substrate. Ni(2+)-binding residues include His-251 and His-277. His-325 (proton donor) is an active-site residue. Asp-365 contributes to the Ni(2+) binding site.

The protein belongs to the metallo-dependent hydrolases superfamily. Urease alpha subunit family. Heterotrimer of UreA (gamma), UreB (beta) and UreC (alpha) subunits. Three heterotrimers associate to form the active enzyme. The cofactor is Ni cation. In terms of processing, carboxylation allows a single lysine to coordinate two nickel ions.

It localises to the cytoplasm. The catalysed reaction is urea + 2 H2O + H(+) = hydrogencarbonate + 2 NH4(+). It participates in nitrogen metabolism; urea degradation; CO(2) and NH(3) from urea (urease route): step 1/1. The polypeptide is Urease subunit alpha (Laribacter hongkongensis (strain HLHK9)).